A 555-amino-acid chain; its full sequence is 5'-nucleotidase-related protein (555 aa).

A signal peptide spans 1-25; sequence MKSLIGTLGLYCLFILTNNVVSSYG. Positions 38, 40, and 91 each coordinate a divalent metal cation. A glycan (N-linked (GlcNAc...) asparagine) is linked at asparagine 105. Residue asparagine 123 coordinates a divalent metal cation. N-linked (GlcNAc...) asparagine glycosylation occurs at asparagine 198. A divalent metal cation contacts are provided by histidine 225 and histidine 249. The N-linked (GlcNAc...) asparagine glycan is linked to asparagine 295. The AMP site is built by arginine 358, arginine 402, and phenylalanine 421. Asparagine 465 is a glycosylation site (N-linked (GlcNAc...) asparagine). Residues phenylalanine 505 and aspartate 511 each coordinate AMP.

The protein belongs to the 5'-nucleotidase family. Mg(2+) serves as cofactor. The cofactor is Mn(2+). Salivary gland (at protein level). Saliva (at protein level).

It localises to the secreted. The enzyme catalyses a ribonucleoside 5'-triphosphate + 2 H2O = a ribonucleoside 5'-phosphate + 2 phosphate + 2 H(+). Its activity is regulated as follows. DEPC (2 mM), sodium fluoride (10 mM) and 4,4'-Diisothiocyano-2,2'-stilbenedisulfonic acid (DIDS, 100 uM) nearly completely abrogate activity. Concanavalin A enhances activity. Facilitates hematophagy by inhibiting ADP-dependent platelet aggregation and promoting disaggregation of ADP-stimulated platelets in the host. Cleaves adenosine triphosphate (ATP) and adenosine diphosphate (ADP) to adenosine monophosphate (AMP) and inorganic phosphate. Interacts with fibrinogen receptor integrin alpha-IIb/beta-3 (ITGA2B/ITGB3). This Glossina morsitans morsitans (Savannah tsetse fly) protein is 5'-nucleotidase-related protein.